Here is a 565-residue protein sequence, read N- to C-terminus: Arginine--tRNA ligase (565 aa).

The 'HIGH' region motif lies at 121-131; sequence PNIAKPMGMGH.

This sequence belongs to the class-I aminoacyl-tRNA synthetase family. In terms of assembly, monomer.

The protein localises to the cytoplasm. The catalysed reaction is tRNA(Arg) + L-arginine + ATP = L-arginyl-tRNA(Arg) + AMP + diphosphate. This chain is Arginine--tRNA ligase, found in Lactobacillus delbrueckii subsp. bulgaricus (strain ATCC BAA-365 / Lb-18).